The sequence spans 341 residues: Golgi-associated RAB2 interactor protein 1B (341 aa).

It belongs to the GARIN family. Expressed in testis (at protein level).

It localises to the golgi apparatus. Functionally, RAB2B effector protein required for accurate acrosome formation and normal male fertility. In complex with RAB2A/RAB2B, seems to suppress excessive vesicle trafficking during acrosome formation. This Mus musculus (Mouse) protein is Golgi-associated RAB2 interactor protein 1B.